A 526-amino-acid chain; its full sequence is MSDNKVEVDKRRTFAIISHPDAGKTTITEKVLLFGNALQKAGTVKGKKSGQHAKSDWMEMEKDRGISITTSVMQFPYGGALVNLLDTPGHEDFSEDTYRTLTAVDSCLMVIDSAKGVEDRTIKLMEVTRLRDTPIVTFMNKLDRDIRDPIELMDEVEDVLNIACAPITWPIGSGKEFKGVYHILRDEVVLYQSGMGHTIQERRVIEGIDNPELDKAIGSYAADLRDEMELVRGASNEFDHQAFLKGELTPVFFGTALGNFGVDHILDGIVEWAPKPLPRESDARMIMPDEEKFTGFVFKIQANMDPKHRDRVAFMRVCSGRYEQGMKMHHVRIGKDVNVSDALTFMAGDRERAEVAYPGDIIGLHNHGTIRIGDTFTQGEKFRFTGVPNFAPEMFRRIRLRDPLKQKQLLKGLVQLSEEGAVQVFRPLDTNDLIVGAVGVLQFEVVVGRLKSEYNVEAIYEGISVSTARWVYCKDERKLEEFRRKCSQNLALDGGDNLTYIAPTMVNLNLSMERYPDIEFAKTREH.

The region spanning 9 to 277 is the tr-type G domain; sequence DKRRTFAIIS…GIVEWAPKPL (269 aa). Residues 18 to 25, 86 to 90, and 140 to 143 contribute to the GTP site; these read SHPDAGKT, DTPGH, and NKLD.

The protein belongs to the TRAFAC class translation factor GTPase superfamily. Classic translation factor GTPase family. PrfC subfamily.

The protein localises to the cytoplasm. Functionally, increases the formation of ribosomal termination complexes and stimulates activities of RF-1 and RF-2. It binds guanine nucleotides and has strong preference for UGA stop codons. It may interact directly with the ribosome. The stimulation of RF-1 and RF-2 is significantly reduced by GTP and GDP, but not by GMP. In Shewanella sp. (strain MR-4), this protein is Peptide chain release factor 3.